Here is a 254-residue protein sequence, read N- to C-terminus: 5-oxoprolinase subunit A 1 (254 aa).

Belongs to the LamB/PxpA family. Forms a complex composed of PxpA, PxpB and PxpC.

It carries out the reaction 5-oxo-L-proline + ATP + 2 H2O = L-glutamate + ADP + phosphate + H(+). Functionally, catalyzes the cleavage of 5-oxoproline to form L-glutamate coupled to the hydrolysis of ATP to ADP and inorganic phosphate. The protein is 5-oxoprolinase subunit A 1 of Burkholderia pseudomallei (strain K96243).